The chain runs to 608 residues: Rap1 GTPase-GDP dissociation stimulator 1 (608 aa).

ARM repeat units lie at residues 89–131 (GLIS…DQAG) and 171–212 (DSLQ…NLAE). The tract at residues 122-171 (EGRSAVDQAGGAQIVVDHLRSLCSKTDPASEKLLTVFCGMLMNYSNEKND) is prevents binding to prenylated RHOA. Lysine 231 is subject to N6-acetyllysine. 3 ARM repeats span residues 348–391 (DGNC…NLAI), 392–432 (PVVN…MLID), and 480–520 (SKDV…LIAA).

In terms of assembly, interacts with RABL3. Interacts with RHOT1. As to quaternary structure, interacts with unprenylated RHOA; the interaction is direct. Interacts with RAP1A. Interacts with KRAS. Interacts with RAC1. Interacts with RAP1B. Preferentially interacts with unprenylated GTPases that will become geranylgeranylated. May also interact with prenylated GTPases. Interacts with prenylated RHOA; the interaction is direct and in a 1:1 stoichiometry. Interacts with RAP1A. Interacts with KRAS. Interacts with RAC1. Interacts with RAP1B. Preferentially interacts with prenylated GTPases. Post-translationally, the N-terminus is blocked. In terms of processing, forms covalent cross-links mediated by transglutaminase TGM2, between a glutamine and the epsilon-amino group of a lysine residue, forming homopolymers and heteropolymers. Brain.

The protein resides in the cytoplasm. It is found in the cytosol. Its subcellular location is the endoplasmic reticulum. The protein localises to the mitochondrion. It localises to the nucleus. In terms of biological role, acts as a GEF (guanine nucleotide exchange factor) for the Rho family of small GTP-binding proteins (G proteins) that stimulates the dissociation of GDP to enable subsequent binding of GTP. Additionally, appears to chaperone the processing and/or trafficking of small GTPases containing a C-terminal polybasic region independently of GEF activity. Targets include RAP1A/RAP1B, RHOA, RHOB, RHOC, RAC1 and KRAS. Regulates mitochondrial dynamics by controlling RHOT function to promote mitochondrial fission during high calcium conditions. Able to promote the Ca(2+) release from the endoplasmic reticulum via both inositol trisphosphate (Ins3P) and ryanodine sensitive receptors leading to a enhanced mitochondrial Ca(2+) uptake. Its function is as follows. Acts as a GEF (guanine nucleotide exchange factor) for unprenylated RHOA. Chaperones the entry and passage of small GTPases through the prenylation pathway. Recognizes the last amino acid in the GTPase C-terminal CAAX motif with a preference for 'Leu' over 'Met', indicating involvement in the geranylgeranylation pathway. May also recognize prenylated GTPases. Functionally, acts as a GEF (guanine nucleotide exchange factor) for prenylated RHOA. Acts as a GEF for RHOC. Chaperones the downstream trafficking and/or processing of small newly prenylated GTPases. Escorts RAC1 to the nucleus. In Bos taurus (Bovine), this protein is Rap1 GTPase-GDP dissociation stimulator 1 (RAP1GDS1).